We begin with the raw amino-acid sequence, 500 residues long: FAD-linked oxidoreductase easE (500 aa).

Positions 37 to 220 (QGRIPLFTVG…TRATMRVFPD (184 aa)) constitute an FAD-binding PCMH-type domain.

Belongs to the oxygen-dependent FAD-linked oxidoreductase family. Requires FAD as cofactor.

Its pathway is alkaloid biosynthesis; ergot alkaloid biosynthesis. Functionally, FAD-linked oxidoreductase; part of the gene cluster that mediates the biosynthesis of fungal ergot alkaloid. DmaW catalyzes the first step of ergot alkaloid biosynthesis by condensing dimethylallyl diphosphate (DMAP) and tryptophan to form 4-dimethylallyl-L-tryptophan. The second step is catalyzed by the methyltransferase easF that methylates 4-dimethylallyl-L-tryptophan in the presence of S-adenosyl-L-methionine, resulting in the formation of 4-dimethylallyl-L-abrine. The catalase easC and the FAD-dependent oxidoreductase easE then transform 4-dimethylallyl-L-abrine to chanoclavine-I which is further oxidized by easD in the presence of NAD(+), resulting in the formation of chanoclavine-I aldehyde. Chanoclavine-I aldehyde is the precursor of ergoamides and ergopeptines in Clavicipitaceae, and clavine-type alcaloids such as fumiclavine in Trichocomaceae. However, the metabolites downstream of chanoclavine-I aldehyde in Arthrodermataceae have not been identified yet. This chain is FAD-linked oxidoreductase easE, found in Arthroderma benhamiae (strain ATCC MYA-4681 / CBS 112371) (Trichophyton mentagrophytes).